A 551-amino-acid polypeptide reads, in one-letter code: Peptidyl-prolyl cis-trans isomerase-like 4 (551 aa).

The PPIase cyclophilin-type domain occupies 1–185 (MSVLLETSLG…RDIRIRHVVV (185 aa)). A disordered region spans residues 54 to 88 (GDPSNTGKGGASIWSQLPSTSQDSSTSTYFTPESS). A compositionally biased stretch (polar residues) spans 66 to 88 (IWSQLPSTSQDSSTSTYFTPESS). Residues 262–340 (NILFVCKLNP…RRIWVDFSQS (79 aa)) form the RRM domain. The disordered stretch occupies residues 352-551 (RNAGSDAPRA…RQRSRDGSRR (200 aa)). Composition is skewed to basic and acidic residues over residues 384 to 397 (KRGD…RDQP) and 408 to 454 (SRQD…SHRD). The segment covering 455-464 (HERHHLSRHV) has biased composition (basic residues). Residues 465-551 (RPSDEGESKC…RQRSRDGSRR (87 aa)) are compositionally biased toward basic and acidic residues.

The protein belongs to the cyclophilin-type PPIase family. PPIL4 subfamily.

It is found in the nucleus. The catalysed reaction is [protein]-peptidylproline (omega=180) = [protein]-peptidylproline (omega=0). Functionally, PPIases accelerate the folding of proteins. It catalyzes the cis-trans isomerization of proline imidic peptide bonds in oligopeptides. This Mycosarcoma maydis (Corn smut fungus) protein is Peptidyl-prolyl cis-trans isomerase-like 4 (CYP6).